We begin with the raw amino-acid sequence, 388 residues long: Succinate--CoA ligase [ADP-forming] subunit beta (388 aa).

An ATP-grasp domain is found at 9 to 244 (KQLFAEYGLP…PSQDDPREAH (236 aa)). Residues Lys-46, 53–55 (GRG), Glu-99, Thr-102, and Glu-107 contribute to the ATP site. Positions 199 and 213 each coordinate Mg(2+). Residues Asn-264 and 321–323 (GIV) contribute to the substrate site.

Belongs to the succinate/malate CoA ligase beta subunit family. In terms of assembly, heterotetramer of two alpha and two beta subunits. Mg(2+) serves as cofactor.

It carries out the reaction succinate + ATP + CoA = succinyl-CoA + ADP + phosphate. The catalysed reaction is GTP + succinate + CoA = succinyl-CoA + GDP + phosphate. The protein operates within carbohydrate metabolism; tricarboxylic acid cycle; succinate from succinyl-CoA (ligase route): step 1/1. Functionally, succinyl-CoA synthetase functions in the citric acid cycle (TCA), coupling the hydrolysis of succinyl-CoA to the synthesis of either ATP or GTP and thus represents the only step of substrate-level phosphorylation in the TCA. The beta subunit provides nucleotide specificity of the enzyme and binds the substrate succinate, while the binding sites for coenzyme A and phosphate are found in the alpha subunit. The chain is Succinate--CoA ligase [ADP-forming] subunit beta from Pseudomonas putida (strain GB-1).